The primary structure comprises 458 residues: BPI fold-containing family B member 2 (458 aa).

Positions Met-1–Ala-20 are cleaved as a signal peptide. Phosphothreonine; by FAM20C is present on Thr-52. Position 60 is a phosphoserine; by FAM20C (Ser-60). 4 N-linked (GlcNAc...) asparagine glycosylation sites follow: Asn-96, Asn-151, Asn-293, and Asn-332. An intrachain disulfide couples Cys-137 to Cys-174.

It belongs to the BPI/LBP/Plunc superfamily. BPI/LBP family. As to expression, highly expressed in tonsils, especially in hypertrophic tonsils. Detected at very low levels in fetal liver.

It is found in the secreted. This Homo sapiens (Human) protein is BPI fold-containing family B member 2 (BPIFB2).